We begin with the raw amino-acid sequence, 534 residues long: H(+)/hexose cotransporter 1 (534 aa).

The Cytoplasmic segment spans residues 1–21; that stretch reads MAGGGVVVVSGRGLSTGDYRG. Residues 22-42 traverse the membrane as a helical segment; sequence GLTVYVVMVAFMAACGGLLLG. At 43-87 the chain is on the extracellular side; that stretch reads YDNGVTGGVVSLEAFEKKFFPDVWAKKQEVHEDSPYCTYDNAKLQ. Residues 88-108 traverse the membrane as a helical segment; sequence LFVSSLFLAGLVSCLFASWIT. Residues 109-114 lie on the Cytoplasmic side of the membrane; sequence RNWGRK. A helical transmembrane segment spans residues 115 to 135; it reads VTMGIGGAFFVAGGLVNAFAQ. At 136 to 144 the chain is on the extracellular side; that stretch reads DMAMLIVGR. Residues 145-165 traverse the membrane as a helical segment; that stretch reads VLLGFGVGLGSQVVPQYLSEV. Residues 166 to 173 are Cytoplasmic-facing; sequence APFSHRGM. Residues 174–194 traverse the membrane as a helical segment; it reads LNIGYQLFVTIGILIAGLVNY. The Extracellular portion of the chain corresponds to 195 to 204; it reads AVRDWENGWR. A helical membrane pass occupies residues 205-225; sequence LSLGPAAAPGAILFLGSLVLP. Residues 226 to 299 lie on the Cytoplasmic side of the membrane; that stretch reads ESPNFLVEKG…TSFVIQFFQQ (74 aa). Residues 300–322 form a helical membrane-spanning segment; sequence FTGINAIIFYVPVLFSSLGSANS. At 323–328 the chain is on the extracellular side; sequence AALLNT. A helical transmembrane segment spans residues 329–349; that stretch reads VVVGAVNVGSTLIAVMFSDKF. The Cytoplasmic portion of the chain corresponds to 350–352; that stretch reads GRR. Residues 353–373 traverse the membrane as a helical segment; the sequence is FLLIEGGIQCCLAMLTTGVVL. Topologically, residues 374-387 are extracellular; it reads AIEFAKYGTDPLPK. The chain crosses the membrane as a helical span at residues 388–408; it reads AVASGILAVICIFISGFAWSW. The Cytoplasmic portion of the chain corresponds to 409 to 433; the sequence is GPMGWLIPSEIFTLETRPAGTAVAV. A helical membrane pass occupies residues 434-454; the sequence is VGNFLFSFVIGQAFVSMLCAM. Topologically, residues 455-456 are extracellular; sequence EY. A helical membrane pass occupies residues 457–477; the sequence is GVFLFFAGWLVIMVLCAIFLL. Residues 478–534 are Cytoplasmic-facing; sequence PETKGVPIERVQALYARHWFWNRVMGPAAAEVIAEDEKRVAAASAIIKEEELSKAMK.

The protein belongs to the major facilitator superfamily. Sugar transporter (TC 2.A.1.1) family.

It localises to the membrane. Active uptake of hexoses. This chain is H(+)/hexose cotransporter 1 (HUP1), found in Parachlorella kessleri (Green alga).